The sequence spans 475 residues: MTNSEQERWSRVKGRLRSTVGEDVYTSWFARMDLEAVQDESVHLSVPTRFLKSWIQAHYAERVLSCWQAEMPEVHRIDLSVRTAMRCATPAKEAPVAVEARRAERGDAKPADTRAPVMTPVAASHDALGGSPLDPRLTFASFVVGRANTLAHAAARQVADGRRGDPVMFNPLYIHAGVGLGKTHLLQAVTWAGNAGGERKVLYLTAEKFMYGFVAALKSQTALAFKEALRGIDVLVIDDLQFLQGKSTQAEFCHTLNALIDAGRQVVIAADRPPSDLESLDDRVRSRLAGGLVVEMATLGEDLRLGILKSRVAAARAHHASFDVPEPVLDYLARSITHNGRDLEGAINRLLAHSKLNNQPVTLDMAEREVRDLVRPQEPKRIKIEDIQRVVARQYNVSRSDLLSSRRTANVVRPRQVAMYLAKTLTLRSLPEIGRRFGGRDHTTVLHAVRKIEALVGKDTTLNDEVEALKRQLQD.

Positions 1–73 are domain I, interacts with DnaA modulators; that stretch reads MTNSEQERWS…LSCWQAEMPE (73 aa). A domain II region spans residues 73–131; that stretch reads EVHRIDLSVRTAMRCATPAKEAPVAVEARRAERGDAKPADTRAPVMTPVAASHDALGGS. The segment at 132 to 354 is domain III, AAA+ region; the sequence is PLDPRLTFAS…GAINRLLAHS (223 aa). ATP is bound by residues Gly-179, Gly-181, Lys-182, and Thr-183. Residues 355 to 475 are domain IV, binds dsDNA; it reads KLNNQPVTLD…VEALKRQLQD (121 aa).

This sequence belongs to the DnaA family. In terms of assembly, oligomerizes as a right-handed, spiral filament on DNA at oriC.

The protein resides in the cytoplasm. Its function is as follows. Plays an essential role in the initiation and regulation of chromosomal replication. ATP-DnaA binds to the origin of replication (oriC) to initiate formation of the DNA replication initiation complex once per cell cycle. Binds the DnaA box (a 9 base pair repeat at the origin) and separates the double-stranded (ds)DNA. Forms a right-handed helical filament on oriC DNA; dsDNA binds to the exterior of the filament while single-stranded (ss)DNA is stabiized in the filament's interior. The ATP-DnaA-oriC complex binds and stabilizes one strand of the AT-rich DNA unwinding element (DUE), permitting loading of DNA polymerase. After initiation quickly degrades to an ADP-DnaA complex that is not apt for DNA replication. Binds acidic phospholipids. The polypeptide is Chromosomal replication initiator protein DnaA (Bradyrhizobium sp. (strain BTAi1 / ATCC BAA-1182)).